The primary structure comprises 396 residues: MGIKHCCYILYFTLALVTLLQPVRSAEDLQEILPVNETRRLTTSGAYNIIDGCWRGKADWAENRKALADCAQGFGKGTVGGKDGDIYTVTSELDDDVANPKEGTLRFGAAQNRPLWIIFERDMVIRLDKEMVVNSDKTIDGRGAKVEIINAGFTLNGVKNVIIHNINMHDVKVNPGGLIKSNDGPAAPRAGSDGDAISISGSSQIWIDHCSLSKSVDGLVDAKLGTTRLTVSNSLFTQHQFVLLFGAGDENIEDRGMLATVAFNTFTDNVDQRMPRCRHGFFQVVNNNYDKWGSYAIGGSASPTILSQGNRFCAPDERSKKNVLGRHGEAAAESMKWNWRTNKDVLENGAIFVASGVDPVLTPEQSAGMIPAEPGESALSLTSSAGVLSCQPGAPC.

Residues 1–25 (MGIKHCCYILYFTLALVTLLQPVRS) form the signal peptide. An N-linked (GlcNAc...) asparagine glycan is attached at Asn-36. The cysteines at positions 53 and 70 are disulfide-linked. Positions 193, 217, and 221 each coordinate Ca(2+). Arg-273 is an active-site residue.

It belongs to the polysaccharide lyase 1 family. Amb a subfamily. As to quaternary structure, monomer. Ca(2+) serves as cofactor. Post-translationally, the N-terminus is blocked. As to expression, pollen and flowers.

It catalyses the reaction Eliminative cleavage of (1-&gt;4)-alpha-D-galacturonan to give oligosaccharides with 4-deoxy-alpha-D-galact-4-enuronosyl groups at their non-reducing ends.. It participates in glycan metabolism; pectin degradation; 2-dehydro-3-deoxy-D-gluconate from pectin: step 2/5. In terms of biological role, has pectate lyase activity. The polypeptide is Pectate lyase 5 (Ambrosia artemisiifolia (Common ragweed)).